The chain runs to 203 residues: Ras-related protein RABG3b (203 aa).

GTP is bound at residue 15 to 22; it reads GDSGVGKT. The Effector region motif lies at 37-45; sequence YKATIGADF. GTP-binding positions include 63-67, 125-128, and 158-159; these read DTAGQ, NKVD, and SA. 2 S-geranylgeranyl cysteine lipidation sites follow: cysteine 201 and cysteine 203. Position 203 is a cysteine methyl ester (cysteine 203).

The protein belongs to the small GTPase superfamily. Rab family. Interacts with VPS39. Expressed in xylem cells of inflorescence stems.

Its subcellular location is the cell membrane. In terms of biological role, intracellular vesicle trafficking and protein transport. Functions in autophagy. Involved in xylem and tracheary element differentiation. In Arabidopsis thaliana (Mouse-ear cress), this protein is Ras-related protein RABG3b (RABG3B).